Reading from the N-terminus, the 141-residue chain is NADPH-dependent 7-cyano-7-deazaguanine reductase (141 aa).

C56 serves as the catalytic Thioimide intermediate. D63 acts as the Proton donor in catalysis. Residues 78-80 (VEL) and 97-98 (HE) contribute to the substrate site.

The protein belongs to the GTP cyclohydrolase I family. QueF type 1 subfamily.

The protein localises to the cytoplasm. The catalysed reaction is 7-aminomethyl-7-carbaguanine + 2 NADP(+) = 7-cyano-7-deazaguanine + 2 NADPH + 3 H(+). The protein operates within tRNA modification; tRNA-queuosine biosynthesis. Catalyzes the NADPH-dependent reduction of 7-cyano-7-deazaguanine (preQ0) to 7-aminomethyl-7-deazaguanine (preQ1). The protein is NADPH-dependent 7-cyano-7-deazaguanine reductase of Trichodesmium erythraeum (strain IMS101).